The following is a 134-amino-acid chain: ATP synthase epsilon chain (134 aa).

Over residues 94 to 104 the composition is skewed to basic and acidic residues; that stretch reads AKLAKSRAESH. The segment at 94 to 115 is disordered; the sequence is AKLAKSRAESHLEEDDDNTDIN.

It belongs to the ATPase epsilon chain family. F-type ATPases have 2 components, CF(1) - the catalytic core - and CF(0) - the membrane proton channel. CF(1) has five subunits: alpha(3), beta(3), gamma(1), delta(1), epsilon(1). CF(0) has three main subunits: a, b and c.

It localises to the cell membrane. Functionally, produces ATP from ADP in the presence of a proton gradient across the membrane. The polypeptide is ATP synthase epsilon chain (Staphylococcus epidermidis (strain ATCC 35984 / DSM 28319 / BCRC 17069 / CCUG 31568 / BM 3577 / RP62A)).